A 395-amino-acid chain; its full sequence is Fe(3+) ions import ATP-binding protein FbpC 2 (395 aa).

The interval 1-21 is disordered; that stretch reads MHIAQELADETCNSPRGAGHA. In terms of domain architecture, ABC transporter spans 23-264; it reads LRYPSDRRTA…PKTLFVADFI (242 aa). 66 to 73 is a binding site for ATP; that stretch reads GPSGCGKT.

It belongs to the ABC transporter superfamily. Fe(3+) ion importer (TC 3.A.1.10) family. The complex is composed of two ATP-binding proteins (FbpC), two transmembrane proteins (FbpB) and a solute-binding protein (FbpA).

The protein resides in the cell inner membrane. It catalyses the reaction Fe(3+)(out) + ATP + H2O = Fe(3+)(in) + ADP + phosphate + H(+). Functionally, part of the ABC transporter complex FbpABC involved in Fe(3+) ions import. Responsible for energy coupling to the transport system. The chain is Fe(3+) ions import ATP-binding protein FbpC 2 from Rhizobium meliloti (strain 1021) (Ensifer meliloti).